The primary structure comprises 188 residues: Peptidyl-tRNA hydrolase (188 aa).

F14 is a binding site for tRNA. H19 acts as the Proton acceptor in catalysis. The tRNA site is built by Y64, N66, and N112.

This sequence belongs to the PTH family. Monomer.

The protein resides in the cytoplasm. It catalyses the reaction an N-acyl-L-alpha-aminoacyl-tRNA + H2O = an N-acyl-L-amino acid + a tRNA + H(+). Functionally, hydrolyzes ribosome-free peptidyl-tRNAs (with 1 or more amino acids incorporated), which drop off the ribosome during protein synthesis, or as a result of ribosome stalling. Its function is as follows. Catalyzes the release of premature peptidyl moieties from peptidyl-tRNA molecules trapped in stalled 50S ribosomal subunits, and thus maintains levels of free tRNAs and 50S ribosomes. The chain is Peptidyl-tRNA hydrolase from Onion yellows phytoplasma (strain OY-M).